Reading from the N-terminus, the 143-residue chain is MRVLVQRVSRAQVTVDGEVVGAIDPQPQGLLALVGVTHDDDAAKAQRLAEKLWKLRILDDERSASDVAAPILVISQFTLYANTDKGRRPSWNAAAPGSVAEPLVTEFTEALRRLGATVETGVFGAHMEVELVNDGPVTVLLEL.

The short motif at 135–136 (GP) is the Gly-cisPro motif, important for rejection of L-amino acids element.

It belongs to the DTD family. In terms of assembly, homodimer.

Its subcellular location is the cytoplasm. The enzyme catalyses glycyl-tRNA(Ala) + H2O = tRNA(Ala) + glycine + H(+). The catalysed reaction is a D-aminoacyl-tRNA + H2O = a tRNA + a D-alpha-amino acid + H(+). In terms of biological role, an aminoacyl-tRNA editing enzyme that deacylates mischarged D-aminoacyl-tRNAs. Also deacylates mischarged glycyl-tRNA(Ala), protecting cells against glycine mischarging by AlaRS. Acts via tRNA-based rather than protein-based catalysis; rejects L-amino acids rather than detecting D-amino acids in the active site. By recycling D-aminoacyl-tRNA to D-amino acids and free tRNA molecules, this enzyme counteracts the toxicity associated with the formation of D-aminoacyl-tRNA entities in vivo and helps enforce protein L-homochirality. This is D-aminoacyl-tRNA deacylase from Mycolicibacterium smegmatis (strain ATCC 700084 / mc(2)155) (Mycobacterium smegmatis).